Here is a 1627-residue protein sequence, read N- to C-terminus: Pappalysin-1 (1627 aa).

The N-terminal stretch at 1–22 (MRLWSWVLHLGLLSAALGCGLA) is a signal peptide. Positions 23-81 (ERPRRARRDPRAGRPPRPAAGPATCATRAARGRRASPPPPPPPGGAWEAVRVPRRRQQR) are excised as a propeptide. Positions 23–99 (ERPRRARRDP…PSPPSRALYF (77 aa)) are disordered. Low complexity predominate over residues 42–51 (AGPATCATRA). 17 cysteine pairs are disulfide-bonded: C144/C235, C327/C622, C332/C657, C414/C428, C424/C440, C457/C473, C474/C485, C583/C600, C587/C612, C710/C878, C713/C881, C753/C835, C775/C781, C947/C975, C960/C971, C983/C990, and C999/C1011. Positions 272-583 (METHGAHTAL…FRGISEIQSC (312 aa)) are metalloprotease. Residues N390 and N402 are each glycosylated (N-linked (GlcNAc...) asparagine). An N-linked (GlcNAc...) asparagine glycan is attached at N429. N-linked (GlcNAc...) asparagine glycosylation occurs at N480. Residue H562 coordinates Zn(2+). The active site involves E563. Zn(2+) contacts are provided by H566 and H572. N-linked (GlcNAc...) asparagine glycans are attached at residues N601, N619, and N725. Residues 733–754 (SPSGHWSPREAEGHPDVEQPCK) form a disordered region. Residues 739–751 (SPREAEGHPDVEQ) show a composition bias toward basic and acidic residues. An N-linked (GlcNAc...) asparagine glycan is attached at N825. N1026 carries N-linked (GlcNAc...) asparagine glycosylation. 19 cysteine pairs are disulfide-bonded: C1036–C1070, C1051–C1139, C1192–C1205, C1215–C1269, C1227–C1238, C1242–C1280, C1285–C1329, C1300–C1310, C1314–C1342, C1346–C1399, C1362–C1373, C1377–C1410, C1415–C1458, C1428–C1438, C1442–C1471, C1478–C1539, C1492–C1502, C1506–C1554, and C1558–C1576. Sushi domains lie at 1213–1282 (TDCP…ACEP), 1283–1344 (VDCS…LCEL), 1345–1412 (MCLA…ACVP), 1413–1473 (VTCD…VCQE), and 1476–1556 (GQCS…HCVK). 2 N-linked (GlcNAc...) asparagine glycosylation sites follow: N1222 and N1226. N1323 carries an N-linked (GlcNAc...) asparagine glycan. The N-linked (GlcNAc...) asparagine glycan is linked to N1465. N1519 is a glycosylation site (N-linked (GlcNAc...) asparagine).

Belongs to the peptidase M43B family. Homodimer; disulfide-linked. In pregnancy serum, predominantly found as a disulfide-linked 2:2 heterotetramer with the proform of PRG2. Requires Zn(2+) as cofactor. Post-translationally, there appear to be no free sulfhydryl groups. As to expression, high levels in placenta and pregnancy serum. In placenta, expressed in X cells in septa and anchoring villi, and in syncytiotrophoblasts in the chorionic villi. Lower levels are found in a variety of other tissues including kidney, myometrium, endometrium, ovaries, breast, prostate, bone marrow, colon, fibroblasts and osteoblasts.

The protein localises to the secreted. The enzyme catalyses Cleavage of the 135-Met-|-Lys-136 bond in insulin-like growth factor binding protein (IGFBP)-4, and the 143-Ser-|-Lys-144 bond in IGFBP-5.. Inhibited by complexation with the proform of PRG2. Functionally, metalloproteinase which specifically cleaves IGFBP-4 and IGFBP-5, resulting in release of bound IGF. Cleavage of IGFBP-4 is dramatically enhanced by the presence of IGF, whereas cleavage of IGFBP-5 is slightly inhibited by the presence of IGF. This chain is Pappalysin-1 (PAPPA), found in Homo sapiens (Human).